The following is an 871-amino-acid chain: Rho guanine nucleotide exchange factor 26 (871 aa).

Disordered regions lie at residues 1–49 (MDGE…LLIT), 86–233 (AQRR…NPSV), and 288–310 (PLGH…SLRR). At S22 the chain carries Phosphoserine. Positions 136 to 156 (PAPPPPPVLRPPRTPNAPAPC) are enriched in pro residues. Residues 173–192 (PTANGLAANNDSPGSGSQSG) show a composition bias toward polar residues. A Phosphoserine modification is found at S392. A DH domain is found at 439–623 (KRQEAIFEVI…SKLVRLCNEG (185 aa)). The PH domain occupies 655 to 782 (WLVKRGELTA…WITALGHSSG (128 aa)). Residues 789-850 (TSLTQVEIVR…PMECAKEITC (62 aa)) form the SH3 domain.

As to quaternary structure, interacts with ICAM1 and RHOG. As to expression, isoform 1 is broadly expressed, with highest levels in liver (at protein level). Certain mRNA species appear to be specifically expressed in prostate and liver.

Its subcellular location is the cell projection. It localises to the ruffle. Activates RhoG GTPase by promoting the exchange of GDP by GTP. Required for the formation of membrane ruffles during macropinocytosis. Required for the formation of cup-like structures during trans-endothelial migration of leukocytes. In case of Salmonella enterica infection, activated by SopB, which induces cytoskeleton rearrangements and promotes bacterial entry. The polypeptide is Rho guanine nucleotide exchange factor 26 (ARHGEF26) (Homo sapiens (Human)).